The sequence spans 46 residues: Osteocalcin 2 (46 aa).

Residues 1–43 form the Gla domain; sequence AVPAGTLSPLQMESLREVCEVNVACDEMADTAGIVAAYTXFYG. At threonine 6 the chain carries Phosphothreonine. Ca(2+) is bound by residues glutamate 13, glutamate 17, glutamate 20, and aspartate 26. 4-carboxyglutamate is present on residues glutamate 13, glutamate 17, and glutamate 20. Cysteine 19 and cysteine 25 are disulfide-bonded. 4-carboxyglutamate is present on glutamate 27.

It belongs to the osteocalcin/matrix Gla protein family. Gamma-carboxyglutamate residues are formed by vitamin K dependent carboxylation by GGCX. These residues are essential for the binding of calcium.

The protein localises to the secreted. Its function is as follows. The carboxylated form is one of the main organic components of the bone matrix, which constitutes 1-2% of the total bone protein. The carboxylated form binds strongly to apatite and calcium. This is Osteocalcin 2 from Solea senegalensis (Senegalese sole).